Reading from the N-terminus, the 1213-residue chain is uncharacterized protein (1213 aa).

The PH domain maps to 289–390 (ATKRQGWLLR…WGSVINNARE (102 aa)). Positions 776-945 (LDDIVFDRVY…EVNFLEKATR (170 aa)) constitute a VASt domain. A run of 2 helical transmembrane segments spans residues 996-1016 (LFLQ…FHIF) and 1025-1045 (FLVI…FCFG).

Its subcellular location is the cytoplasm. The protein localises to the nucleus membrane. The protein resides in the cytoskeleton. It localises to the microtubule organizing center. It is found in the spindle pole body. This is an uncharacterized protein from Schizosaccharomyces pombe (strain 972 / ATCC 24843) (Fission yeast).